The sequence spans 260 residues: Serine protease VLSP-1 (260 aa).

Positions 1-18 (MVLIRVLANLLVLHLSYA) are cleaved as a signal peptide. Residues 19–24 (QKSSEL) constitute a propeptide that is removed on maturation. The 227-residue stretch at 25-251 (VIGGDECNIN…YSDWIQSIIA (227 aa)) folds into the Peptidase S1 domain. 6 disulfide bridges follow: Cys31/Cys165, Cys52/Cys68, Cys100/Cys258, Cys144/Cys212, Cys176/Cys191, and Cys202/Cys227. N-linked (GlcNAc...) asparagine glycosylation occurs at Asn44. His67 serves as the catalytic Charge relay system. Asn103 carries an N-linked (GlcNAc...) asparagine glycan. Catalysis depends on Asp112, which acts as the Charge relay system. An N-linked (GlcNAc...) asparagine glycan is attached at Asn156. Residue Ser206 is the Charge relay system of the active site.

The protein belongs to the peptidase S1 family. Snake venom subfamily. In terms of tissue distribution, expressed by the venom gland.

It localises to the secreted. Functionally, snake venom serine protease that may act in the hemostasis system of the prey. The protein is Serine protease VLSP-1 of Macrovipera lebetinus (Levantine viper).